The chain runs to 185 residues: Pycsar effector protein EcPycTM (185 aa).

3 consecutive transmembrane segments (helical) span residues 32 to 52 (ALLL…VGYF), 63 to 83 (MVIF…SVLL), and 141 to 161 (FILS…VSWI).

It localises to the cell inner membrane. Functionally, pycsar (pyrimidine cyclase system for antiphage resistance) provides immunity against bacteriophage. The pyrimidine cyclase (PycC) synthesizes cyclic nucleotides in response to infection; these serve as specific second messenger signals. The signals activate the adjacent effector, leading to bacterial cell death and abortive phage infection. A clade E Pycsar system. In terms of biological role, the effector component of a two-gene Pycsar system. Expression of this and adjacent cytidylate cyclase EcPycC (AC P0DV24) confers resistance to bacteriophage P1 and T5; this protein is required for resistance. When cells expressing the Pycsar system are infected by phage T5 at low multiplicity of infection (0.2 MOI) the culture survives, at 2.0 MOI bacteria enter growth arrest. The same cells enter growth arrest after exposure to 250 uM cCMP but not cUMP; this effector protein responds only to cCMP, usually produced by its cognate NTP cyclase. Some of the cells treated with cCMP have abnormal membrane protrusions, probably due to effects on membrane integrity. In Escherichia coli, this protein is Pycsar effector protein EcPycTM.